The primary structure comprises 134 residues: Cytochrome b5 (134 aa).

Alanine 2 carries the N-acetylalanine modification. Lysine 7, lysine 10, and lysine 19 each carry N6-acetyllysine. In terms of domain architecture, Cytochrome b5 heme-binding spans 9-85 (VKYYTLEEIQ…SKTFIIGELH (77 aa)). Residues histidine 44 and histidine 68 each coordinate heme. The helical transmembrane segment at 109–131 (WWTNWLIPAISALFVALIYHLYT) threads the bilayer.

Belongs to the cytochrome b5 family.

It is found in the endoplasmic reticulum membrane. The protein resides in the microsome membrane. In terms of biological role, cytochrome b5 is a membrane-bound hemoprotein functioning as an electron carrier for several membrane-bound oxygenases. This chain is Cytochrome b5 (CYB5A), found in Bos taurus (Bovine).